Reading from the N-terminus, the 247-residue chain is Chymase (247 aa).

Residues 1–19 (MLLLPLPLLLFFLCSRAEA) form the signal peptide. Positions 20–21 (GE) are cleaved as a propeptide — activation peptide. The Peptidase S1 domain occupies 22–245 (IIGGTECKPH…YRPWINKILQ (224 aa)). A disulfide bridge links Cys51 with Cys67. The Charge relay system role is filled by His66. 2 N-linked (GlcNAc...) asparagine glycosylation sites follow: Asn80 and Asn103. Asp110 functions as the Charge relay system in the catalytic mechanism. Intrachain disulfides connect Cys144–Cys209 and Cys175–Cys188. Ser203 acts as the Charge relay system in catalysis.

It belongs to the peptidase S1 family. Granzyme subfamily.

It localises to the secreted. It is found in the cytoplasmic granule. The enzyme catalyses Preferential cleavage: Phe-|-Xaa &gt; Tyr-|-Xaa &gt; Trp-|-Xaa &gt; Leu-|-Xaa.. Its function is as follows. Major secreted protease of mast cells with suspected roles in vasoactive peptide generation, extracellular matrix degradation, and regulation of gland secretion. The chain is Chymase (CMA1) from Macaca fascicularis (Crab-eating macaque).